Reading from the N-terminus, the 293-residue chain is MKITEGYMPYLEYKTYYRIVGECTGNKKPLVLLHGGPGSTHNYFEVLDKVAEDGRAVIMYDQLGCGLSATPSRPDLWNAKTWIEELIQLRKHLGLDEIHLLGQSWGGMQAIQYACEYKPEGIKSYILSSTLPAASLWEKEQRRRVAYLPQEMQDAIAKAEKAGDYSSKEYQEAEAEFMLRHCAGAVGPDSPECLRRPKVAGTEAYVTAWGQNEFSPSGTLKNFDFMKEIEDIKEPCLITSGLLDLCSPLVAKTMYDKIPNSEWELFEFSRHMPFVEENEKYIEVLNKWLNKND.

Positions 28 to 277 constitute an AB hydrolase-1 domain; that stretch reads KPLVLLHGGP…FSRHMPFVEE (250 aa). Serine 104 (nucleophile) is an active-site residue. The active site involves aspartate 244. Histidine 271 functions as the Proton donor in the catalytic mechanism.

Belongs to the peptidase S33 family.

It catalyses the reaction Release of N-terminal proline from a peptide.. In terms of biological role, releases the N-terminal proline from various substrates. This Clostridium botulinum (strain Hall / ATCC 3502 / NCTC 13319 / Type A) protein is Proline iminopeptidase.